The sequence spans 235 residues: Sperm-associated microtubule inner protein 5 (235 aa).

Microtubule inner protein component of sperm flagellar doublet microtubules. In terms of tissue distribution, expressed in sperm.

It localises to the cytoplasm. It is found in the cytoskeleton. The protein resides in the flagellum axoneme. Its subcellular location is the nucleus. Its function is as follows. Microtubule inner protein (MIP) part of the dynein-decorated doublet microtubules (DMTs) in flagellum axoneme. May serve to reinforce and thus stabilize the microtubule structure in the sperm flagella. This Bos taurus (Bovine) protein is Sperm-associated microtubule inner protein 5 (SPMIP5).